Consider the following 785-residue polypeptide: Probable cationic amino acid transporter (785 aa).

Helical transmembrane passes span 58 to 78, 83 to 103, 119 to 141, 187 to 207, 216 to 236, 251 to 271, 291 to 311, 337 to 357, 360 to 380, 384 to 404, 407 to 427, 568 to 588, 596 to 616, 628 to 648, and 655 to 675; these read LVSLGVGSCVGTGMYVVSGLV, AGPGVIVSFIIAAVASILSGV, AYTYSYVTVGEFVAFFIGWNLIL, YPDILALVIGILVTVIVALGV, VLNVINLVVWVFIMIAGLFFV, WSGVMQGAATCFYAFIGFDII, ASLVTCLTAYVSVSVILTLMV, IVAIGSIAGLTVSLLGSLFPM, VIYAMAGDGLLFRFLAHVSTY, PAVACVVSGFLSALLALLVSL, LIEMMSIGTLLAYTLVSVCVL, CVVLLFILIFCFCSLIIFGSG, WAVLLLVVLLLVLTLLVFIII, MAPCVPFVPASAMLVNVYLML, and WIRFGVWCFVGVLIYFGYGMW. Positions 715–785 are disordered; that stretch reads DQGPFQNWGK…VDDDLDDPLE (71 aa). Residues 727-740 show a composition bias toward low complexity; sequence QQKQPQQEQSEPQS. Positions 775-785 are enriched in acidic residues; it reads VVDDDLDDPLE.

The protein belongs to the amino acid-polyamine-organocation (APC) superfamily.

It localises to the lysosome membrane. Functionally, may be involved in arginine transport. This Danio rerio (Zebrafish) protein is Probable cationic amino acid transporter (slc7a14a).